A 267-amino-acid chain; its full sequence is Orotidine 5'-phosphate decarboxylase (267 aa).

The active-site Proton donor is lysine 93.

The protein belongs to the OMP decarboxylase family. Type 2 subfamily.

The enzyme catalyses orotidine 5'-phosphate + H(+) = UMP + CO2. It functions in the pathway pyrimidine metabolism; UMP biosynthesis via de novo pathway; UMP from orotate: step 2/2. The sequence is that of Orotidine 5'-phosphate decarboxylase from Herpetosiphon aurantiacus (strain ATCC 23779 / DSM 785 / 114-95).